Consider the following 189-residue polypeptide: GTP cyclohydrolase 1 (189 aa).

Cys-79, His-82, and Cys-150 together coordinate Zn(2+).

The protein belongs to the GTP cyclohydrolase I family. As to quaternary structure, homomer.

The enzyme catalyses GTP + H2O = 7,8-dihydroneopterin 3'-triphosphate + formate + H(+). It functions in the pathway cofactor biosynthesis; 7,8-dihydroneopterin triphosphate biosynthesis; 7,8-dihydroneopterin triphosphate from GTP: step 1/1. This Rickettsia rickettsii (strain Iowa) protein is GTP cyclohydrolase 1.